A 227-amino-acid chain; its full sequence is Cytochrome c oxidase subunit 2 (227 aa).

The Mitochondrial intermembrane segment spans residues 1–14 (MAHAAQVGLQDATS). Residues 15-45 (PIMEELIIFHDHALMIIFLICFLVLYALFLT) form a helical membrane-spanning segment. At 46-59 (LTTKLTNTSISDAQ) the chain is on the mitochondrial matrix side. The helical transmembrane segment at 60-87 (EMETVWTILPAIILVLIALPSLRILYMT) threads the bilayer. Over 88–227 (DEVNDPSFTI…IFEMGPVFTL (140 aa)) the chain is Mitochondrial intermembrane. The Cu cation site is built by H161, C196, E198, C200, H204, and M207. E198 serves as a coordination point for Mg(2+).

It belongs to the cytochrome c oxidase subunit 2 family. In terms of assembly, component of the cytochrome c oxidase (complex IV, CIV), a multisubunit enzyme composed of 14 subunits. The complex is composed of a catalytic core of 3 subunits MT-CO1, MT-CO2 and MT-CO3, encoded in the mitochondrial DNA, and 11 supernumerary subunits COX4I, COX5A, COX5B, COX6A, COX6B, COX6C, COX7A, COX7B, COX7C, COX8 and NDUFA4, which are encoded in the nuclear genome. The complex exists as a monomer or a dimer and forms supercomplexes (SCs) in the inner mitochondrial membrane with NADH-ubiquinone oxidoreductase (complex I, CI) and ubiquinol-cytochrome c oxidoreductase (cytochrome b-c1 complex, complex III, CIII), resulting in different assemblies (supercomplex SCI(1)III(2)IV(1) and megacomplex MCI(2)III(2)IV(2)). Found in a complex with TMEM177, COA6, COX18, COX20, SCO1 and SCO2. Interacts with TMEM177 in a COX20-dependent manner. Interacts with COX20. Interacts with COX16. It depends on Cu cation as a cofactor.

The protein resides in the mitochondrion inner membrane. It carries out the reaction 4 Fe(II)-[cytochrome c] + O2 + 8 H(+)(in) = 4 Fe(III)-[cytochrome c] + 2 H2O + 4 H(+)(out). Functionally, component of the cytochrome c oxidase, the last enzyme in the mitochondrial electron transport chain which drives oxidative phosphorylation. The respiratory chain contains 3 multisubunit complexes succinate dehydrogenase (complex II, CII), ubiquinol-cytochrome c oxidoreductase (cytochrome b-c1 complex, complex III, CIII) and cytochrome c oxidase (complex IV, CIV), that cooperate to transfer electrons derived from NADH and succinate to molecular oxygen, creating an electrochemical gradient over the inner membrane that drives transmembrane transport and the ATP synthase. Cytochrome c oxidase is the component of the respiratory chain that catalyzes the reduction of oxygen to water. Electrons originating from reduced cytochrome c in the intermembrane space (IMS) are transferred via the dinuclear copper A center (CU(A)) of subunit 2 and heme A of subunit 1 to the active site in subunit 1, a binuclear center (BNC) formed by heme A3 and copper B (CU(B)). The BNC reduces molecular oxygen to 2 water molecules using 4 electrons from cytochrome c in the IMS and 4 protons from the mitochondrial matrix. This Pan paniscus (Pygmy chimpanzee) protein is Cytochrome c oxidase subunit 2 (MT-CO2).